The primary structure comprises 903 residues: Protein translocase subunit SecA (903 aa).

ATP-binding positions include Gln87, 105-109 (GEGKT), and Asp512. Positions 853 to 903 (KQQQLSHYEENALVTEDPNAPATAERKVGRNDPCPCGSGKKYKQCHGRLQS) are disordered. Positions 886, 888, 897, and 898 each coordinate Zn(2+). A compositionally biased stretch (basic residues) spans 892 to 903 (KKYKQCHGRLQS).

Belongs to the SecA family. In terms of assembly, monomer and homodimer. Part of the essential Sec protein translocation apparatus which comprises SecA, SecYEG and auxiliary proteins SecDF-YajC and YidC. Requires Zn(2+) as cofactor.

The protein resides in the cell inner membrane. The protein localises to the cytoplasm. The enzyme catalyses ATP + H2O + cellular proteinSide 1 = ADP + phosphate + cellular proteinSide 2.. Part of the Sec protein translocase complex. Interacts with the SecYEG preprotein conducting channel. Has a central role in coupling the hydrolysis of ATP to the transfer of proteins into and across the cell membrane, serving both as a receptor for the preprotein-SecB complex and as an ATP-driven molecular motor driving the stepwise translocation of polypeptide chains across the membrane. The sequence is that of Protein translocase subunit SecA from Serratia proteamaculans (strain 568).